Reading from the N-terminus, the 799-residue chain is Protein translocase subunit SecA 1 (799 aa).

Residues Gln85, 103–107, and Asp504 contribute to the ATP site; that span reads GEGKT.

It belongs to the SecA family. Monomer and homodimer. Part of the essential Sec protein translocation apparatus which comprises SecA, SecYEG and auxiliary proteins SecDF. Other proteins may also be involved.

It is found in the cell membrane. Its subcellular location is the cytoplasm. The catalysed reaction is ATP + H2O + cellular proteinSide 1 = ADP + phosphate + cellular proteinSide 2.. In terms of biological role, part of the Sec protein translocase complex. Interacts with the SecYEG preprotein conducting channel. Has a central role in coupling the hydrolysis of ATP to the transfer of proteins into and across the cell membrane, serving as an ATP-driven molecular motor driving the stepwise translocation of polypeptide chains across the membrane. The sequence is that of Protein translocase subunit SecA 1 from Lactobacillus johnsonii (strain CNCM I-12250 / La1 / NCC 533).